A 101-amino-acid chain; its full sequence is Fructose-bisphosphate aldolase (101 aa).

Residue Lys-11 is the Schiff-base intermediate with dihydroxyacetone-P of the active site.

Belongs to the class I fructose-bisphosphate aldolase family.

The catalysed reaction is beta-D-fructose 1,6-bisphosphate = D-glyceraldehyde 3-phosphate + dihydroxyacetone phosphate. Its pathway is carbohydrate degradation; glycolysis; D-glyceraldehyde 3-phosphate and glycerone phosphate from D-glucose: step 4/4. This Lymnaea stagnalis (Great pond snail) protein is Fructose-bisphosphate aldolase.